Consider the following 145-residue polypeptide: Large ribosomal subunit protein uL11 (145 aa).

Belongs to the universal ribosomal protein uL11 family. As to quaternary structure, part of the ribosomal stalk of the 50S ribosomal subunit. Interacts with L10 and the large rRNA to form the base of the stalk. L10 forms an elongated spine to which L12 dimers bind in a sequential fashion forming a multimeric L10(L12)X complex. In terms of processing, one or more lysine residues are methylated.

In terms of biological role, forms part of the ribosomal stalk which helps the ribosome interact with GTP-bound translation factors. In Rickettsia peacockii (strain Rustic), this protein is Large ribosomal subunit protein uL11.